Consider the following 434-residue polypeptide: 3-phosphoshikimate 1-carboxyvinyltransferase (434 aa).

3-phosphoshikimate contacts are provided by K15, S16, and R20. K15 serves as a coordination point for phosphoenolpyruvate. Residues G96 and R124 each coordinate phosphoenolpyruvate. S169, Q171, S195, D319, and K346 together coordinate 3-phosphoshikimate. Q171 contacts phosphoenolpyruvate. The Proton acceptor role is filled by D319. The phosphoenolpyruvate site is built by R350 and R394.

Belongs to the EPSP synthase family. Monomer.

The protein resides in the cytoplasm. It carries out the reaction 3-phosphoshikimate + phosphoenolpyruvate = 5-O-(1-carboxyvinyl)-3-phosphoshikimate + phosphate. Its pathway is metabolic intermediate biosynthesis; chorismate biosynthesis; chorismate from D-erythrose 4-phosphate and phosphoenolpyruvate: step 6/7. Its function is as follows. Catalyzes the transfer of the enolpyruvyl moiety of phosphoenolpyruvate (PEP) to the 5-hydroxyl of shikimate-3-phosphate (S3P) to produce enolpyruvyl shikimate-3-phosphate and inorganic phosphate. In Chlorobium phaeobacteroides (strain DSM 266 / SMG 266 / 2430), this protein is 3-phosphoshikimate 1-carboxyvinyltransferase.